The sequence spans 351 residues: GTPase Obg (351 aa).

The region spanning 1-159 (MKFLDQAKVY…RWIWLRLKLI (159 aa)) is the Obg domain. The region spanning 160–328 (ADVGLVGLPN…LCGSAWDIVL (169 aa)) is the OBG-type G domain. GTP is bound by residues 166–173 (GLPNAGKS), 191–195 (FTTLY), 213–216 (DIPG), 280–283 (NKID), and 309–311 (SGV). Mg(2+) contacts are provided by S173 and T193.

Belongs to the TRAFAC class OBG-HflX-like GTPase superfamily. OBG GTPase family. As to quaternary structure, monomer. The cofactor is Mg(2+).

It is found in the cytoplasm. In terms of biological role, an essential GTPase which binds GTP, GDP and possibly (p)ppGpp with moderate affinity, with high nucleotide exchange rates and a fairly low GTP hydrolysis rate. Plays a role in control of the cell cycle, stress response, ribosome biogenesis and in those bacteria that undergo differentiation, in morphogenesis control. In Maricaulis maris (strain MCS10) (Caulobacter maris), this protein is GTPase Obg.